The sequence spans 223 residues: Deoxyribose-phosphate aldolase 1 (223 aa).

The active-site Proton donor/acceptor is aspartate 91. The active-site Schiff-base intermediate with acetaldehyde is the lysine 153. The Proton donor/acceptor role is filled by lysine 182.

It belongs to the DeoC/FbaB aldolase family. DeoC type 1 subfamily.

Its subcellular location is the cytoplasm. It catalyses the reaction 2-deoxy-D-ribose 5-phosphate = D-glyceraldehyde 3-phosphate + acetaldehyde. It functions in the pathway carbohydrate degradation; 2-deoxy-D-ribose 1-phosphate degradation; D-glyceraldehyde 3-phosphate and acetaldehyde from 2-deoxy-alpha-D-ribose 1-phosphate: step 2/2. Catalyzes a reversible aldol reaction between acetaldehyde and D-glyceraldehyde 3-phosphate to generate 2-deoxy-D-ribose 5-phosphate. This is Deoxyribose-phosphate aldolase 1 from Yersinia pestis.